Consider the following 695-residue polypeptide: Pre-mRNA-splicing factor CLF1 (695 aa).

HAT repeat units follow at residues 41–73 (DVQR…FEIE), 75–107 (HDMR…SELK), 109–141 (GYIN…VEES), 143–174 (AHFD…FEVR), 176–207 (ERYE…FEVR), 296–328 (TIIL…LLEN), 333–365 (LVME…IWIK), 375–412 (NDIP…FEIR), 414–445 (DNLE…LETK), 447–479 (REFD…FEDS), 521–553 (QNFD…KKLT), and 591–629 (NNKD…FEGQ).

Belongs to the crooked-neck family. Associated with the spliceosome.

Its subcellular location is the nucleus. Functionally, involved in pre-mRNA splicing and cell cycle progression. Required for the spliceosome assembly and initiation of the DNA replication. This Candida glabrata (strain ATCC 2001 / BCRC 20586 / JCM 3761 / NBRC 0622 / NRRL Y-65 / CBS 138) (Yeast) protein is Pre-mRNA-splicing factor CLF1 (CLF1).